The chain runs to 180 residues: Large ribosomal subunit protein uL22 (180 aa).

Disordered stretches follow at residues 1–20 (MTKPVYSKTPSNPEKSCKSR) and 160–180 (PKPAEESAQKKKSVATQEISA). Residues 8 to 20 (KTPSNPEKSCKSR) are compositionally biased toward polar residues.

This sequence belongs to the universal ribosomal protein uL22 family.

In Dictyostelium discoideum (Social amoeba), this protein is Large ribosomal subunit protein uL22 (rpl17).